Consider the following 388-residue polypeptide: MLTMLTDRIDSQLVLSRLPRSRFQRFWETPTLIMKEESAPSSGSIILAEKSVNMRYCVRFASDSDFQTTFTLPQSTEEKYDKEQHPGEDEASSPLPSPLKVPYKWMPSSFIVKQCHTQLAFYNKHIIWLSRERKVPTSLGVSLYIPEGFFGITFYKCLDAQFVCMPELLESGLQVPQLDVVNLNDTFQSIFPGTIEGDIGVFPCFVPEPWQLMNLPPPNEHRFFSLRTRQTLVIGPGHTQTVYFDAAYVHAPGICALIVGVRQFSQSDLIIRPTIWLPGTAAGVTVVNTSHTTVCISPHTTVAKAVFTTHRFTYLPVGSHPLGQMIVPPTPDIGFTHTPEHALLQRTPSPVDDDVDETEEDEKSSDAESPVNTSDVIFDVGPKPPRHP.

Basic and acidic residues predominate over residues 77–88; it reads EEKYDKEQHPGE. Disordered stretches follow at residues 77-96 and 336-388; these read EEKY…SPLP and THTP…PRHP. Acidic residues predominate over residues 351–363; it reads VDDDVDETEEDEK.

This sequence belongs to the dUTPase family. It depends on Mg(2+) as a cofactor.

The catalysed reaction is dUTP + H2O = dUMP + diphosphate + H(+). It functions in the pathway pyrimidine metabolism; dUMP biosynthesis; dUMP from dCTP (dUTP route): step 2/2. In terms of biological role, involved in nucleotide metabolism: produces dUMP, the immediate precursor of thymidine nucleotides and decreases the intracellular concentration of dUTP to avoid uracil incorporation into viral DNA. This Homo sapiens (Human) protein is Deoxyuridine 5'-triphosphate nucleotidohydrolase.